A 644-amino-acid chain; its full sequence is Pesticidal crystal protein Cry3Aa (644 aa).

Basic and acidic residues predominate over residues 1–13 (MNPNNRSEHDTIK). The tract at residues 1 to 20 (MNPNNRSEHDTIKTTENNEV) is disordered. Positions 1–57 (MNPNNRSEHDTIKTTENNEVPTNHVQYPLAETPNPTLEDLNYKEFLRMTADNNTEAL) are cleaved as a propeptide — removed in mature form.

This sequence belongs to the delta endotoxin family.

Functionally, promotes colloidosmotic lysis by binding to the midgut epithelial cells of Coleoptera. The sequence is that of Pesticidal crystal protein Cry3Aa (cry3Aa) from Bacillus thuringiensis subsp. san diego.